Reading from the N-terminus, the 516-residue chain is Glycosyltransferase-like protein gnt15 (516 aa).

Residues 1 to 24 (MSNFYNNNPRRNTFRLTERIKKKP) lie on the Cytoplasmic side of the membrane. Residues 25-45 (YQTLIVFILIFLFLYVFGPFG) traverse the membrane as a helical; Signal-anchor for type II membrane protein segment. The Extracellular segment spans residues 46–516 (EKKSNNNNNN…NDNCLTREHW (471 aa)). N152 carries an N-linked (GlcNAc...) asparagine glycan. Positions 199–250 (DTSNNNNNNNNNNNNNNNNNNNNNNNNNNNNNNNENNDNDNGNNNNNNDNEK) are disordered. Positions 202 to 246 (NNNNNNNNNNNNNNNNNNNNNNNNNNNNNNNENNDNDNGNNNNNN) are enriched in low complexity. N386 and N412 each carry an N-linked (GlcNAc...) asparagine glycan.

It belongs to the glycosyltransferase 8 family. Highly divergent.

Its subcellular location is the membrane. Its function is as follows. May have a role in modulating cell adhesion and glycosylation. Essential for development. The polypeptide is Glycosyltransferase-like protein gnt15 (gnt15) (Dictyostelium discoideum (Social amoeba)).